The following is a 496-amino-acid chain: Glycerol kinase (496 aa).

T12 contributes to the ADP binding site. Residues T12, T13, and S14 each contribute to the ATP site. T12 is a sn-glycerol 3-phosphate binding site. R16 contributes to the ADP binding site. Sn-glycerol 3-phosphate is bound by residues R82, E83, and Y134. The glycerol site is built by R82, E83, and Y134. A Phosphohistidine; by HPr modification is found at H230. D244 lines the sn-glycerol 3-phosphate pocket. Residues D244 and Q245 each contribute to the glycerol site. T266 and G309 together coordinate ADP. T266, G309, Q313, and G410 together coordinate ATP. The ADP site is built by G410 and N414.

Belongs to the FGGY kinase family. Homotetramer and homodimer (in equilibrium). The phosphoenolpyruvate-dependent sugar phosphotransferase system (PTS), including enzyme I, and histidine-containing protein (HPr) are required for the phosphorylation, which leads to the activation of the enzyme.

The enzyme catalyses glycerol + ATP = sn-glycerol 3-phosphate + ADP + H(+). It functions in the pathway polyol metabolism; glycerol degradation via glycerol kinase pathway; sn-glycerol 3-phosphate from glycerol: step 1/1. With respect to regulation, activated by phosphorylation and inhibited by fructose 1,6-bisphosphate (FBP). Key enzyme in the regulation of glycerol uptake and metabolism. Catalyzes the phosphorylation of glycerol to yield sn-glycerol 3-phosphate. The protein is Glycerol kinase of Bacillus mycoides (strain KBAB4) (Bacillus weihenstephanensis).